A 160-amino-acid polypeptide reads, in one-letter code: 6,7-dimethyl-8-ribityllumazine synthase (160 aa).

5-amino-6-(D-ribitylamino)uracil contacts are provided by residues Phe22, 57 to 59, and 81 to 83; these read AVE and AVI. Residue 86-87 participates in (2S)-2-hydroxy-3-oxobutyl phosphate binding; that stretch reads GT. The active-site Proton donor is the His89. A 5-amino-6-(D-ribitylamino)uracil-binding site is contributed by Phe114. Position 128 (Arg128) interacts with (2S)-2-hydroxy-3-oxobutyl phosphate.

The protein belongs to the DMRL synthase family. In terms of assembly, forms an icosahedral capsid composed of 60 subunits, arranged as a dodecamer of pentamers.

It carries out the reaction (2S)-2-hydroxy-3-oxobutyl phosphate + 5-amino-6-(D-ribitylamino)uracil = 6,7-dimethyl-8-(1-D-ribityl)lumazine + phosphate + 2 H2O + H(+). Its pathway is cofactor biosynthesis; riboflavin biosynthesis; riboflavin from 2-hydroxy-3-oxobutyl phosphate and 5-amino-6-(D-ribitylamino)uracil: step 1/2. Catalyzes the formation of 6,7-dimethyl-8-ribityllumazine by condensation of 5-amino-6-(D-ribitylamino)uracil with 3,4-dihydroxy-2-butanone 4-phosphate. This is the penultimate step in the biosynthesis of riboflavin. This is 6,7-dimethyl-8-ribityllumazine synthase from Shewanella sediminis (strain HAW-EB3).